The following is a 46-amino-acid chain: Protein krueppel (46 aa).

3 C2H2-type zinc fingers span residues 1–4, 10–32, and 38–46; these read MRLH, YHCTHCERQFVQVANLRRHLRVH, and YACELCTSK.

It belongs to the krueppel C2H2-type zinc-finger protein family.

The protein resides in the nucleus. Krueppel is a gap class segmentation protein. This Lithobius forficatus (Centipede) protein is Protein krueppel (Kr).